A 349-amino-acid chain; its full sequence is Protein Wnt-7b (349 aa).

The first 24 residues, 1–24, serve as a signal peptide directing secretion; that stretch reads MHRNFRKWIFYVFLCFGVLYVKLG. Cystine bridges form between C73-C84, C123-C131, C133-C152, C200-C214, and C202-C209. N-linked (GlcNAc...) asparagine glycans are attached at residues N83 and N127. The O-palmitoleoyl serine; by PORCN moiety is linked to residue S206. A disordered linker region spans residues 238–266; it reads VEVVRASRLRQPTFLRIKQLRSYQKPMET. 6 disulfides stabilise this stretch: C278/C309, C294/C304, C308/C348, C324/C339, C326/C336, and C331/C332. N295 is a glycosylation site (N-linked (GlcNAc...) asparagine).

Belongs to the Wnt family. In terms of assembly, forms a soluble 1:1 complex with AFM; this prevents oligomerization and is required for prolonged biological activity. The complex with AFM may represent the physiological form in body fluids. Interacts with FZD1 and FZD10. Interacts with FZD4 (in vitro). Interacts with PORCN. Interacts with glypican GPC3. Interacts (via intrinsically disordered linker region) with RECK; interaction with RECK confers ligand selectivity for Wnt7 in brain endothelial cells and allows these cells to selectively respond to Wnt7. Palmitoleoylation is required for efficient binding to frizzled receptors. Depalmitoleoylation leads to Wnt signaling pathway inhibition.

Its subcellular location is the secreted. The protein localises to the extracellular space. It localises to the extracellular matrix. In terms of biological role, ligand for members of the frizzled family of seven transmembrane receptors that functions in the canonical Wnt/beta-catenin signaling pathway. Required for normal fusion of the chorion and the allantois during placenta development. Required for central nervous system (CNS) angiogenesis and blood-brain barrier regulation. This is Protein Wnt-7b (Wnt7b) from Mus musculus (Mouse).